Reading from the N-terminus, the 406-residue chain is MADFEWIDGGVTAAKGFRAGGIASGIKPSGKTDLALIYSENPSAAAGVYTTNLVQAAPVAYNRNLLQQRGKACAIVVNSGNANAATGKAGEEAAIETAQVFARALGFSADQVLVASTGVIGVPLPIEKIRTAAQALVDAATETGSDAAAEAILTTDLVAKSCAVRALIGGKTVHVGGIAKGSGMIHPQMATLLAFITSDCSVDIDLWRQIVARATDRSFNQITVDGDTSTNDMLLALASGEAKNPRILDAASPEAGLLEQMVSAVCVDLAKKVVRDGEGATKLIEVQVAGTGDDAQARKIALTVASSSLVKSAMFGNDPNWGRLAAAAGRAGVEFDPAALAVRLGAFALMEVGQPLAFDRAAASDYLKGSDTVEVHLQVGPGTGNGIAWGCDLSYDYVKINAEYTT.

6 residues coordinate substrate: Thr154, Lys180, Thr191, Glu278, Asn401, and Thr406. Thr191 (nucleophile) is an active-site residue.

It belongs to the ArgJ family. Heterotetramer of two alpha and two beta chains.

It localises to the cytoplasm. The enzyme catalyses N(2)-acetyl-L-ornithine + L-glutamate = N-acetyl-L-glutamate + L-ornithine. It carries out the reaction L-glutamate + acetyl-CoA = N-acetyl-L-glutamate + CoA + H(+). It functions in the pathway amino-acid biosynthesis; L-arginine biosynthesis; L-ornithine and N-acetyl-L-glutamate from L-glutamate and N(2)-acetyl-L-ornithine (cyclic): step 1/1. It participates in amino-acid biosynthesis; L-arginine biosynthesis; N(2)-acetyl-L-ornithine from L-glutamate: step 1/4. In terms of biological role, catalyzes two activities which are involved in the cyclic version of arginine biosynthesis: the synthesis of N-acetylglutamate from glutamate and acetyl-CoA as the acetyl donor, and of ornithine by transacetylation between N(2)-acetylornithine and glutamate. This is Arginine biosynthesis bifunctional protein ArgJ from Gloeobacter violaceus (strain ATCC 29082 / PCC 7421).